A 288-amino-acid chain; its full sequence is T-lymphocyte activation antigen CD80 (288 aa).

Positions methionine 1 to glycine 34 are cleaved as a signal peptide. One can recognise an Ig-like V-type domain in the interval valine 35 to threonine 135. Topologically, residues valine 35 to asparagine 242 are extracellular. 2 disulfide bridges follow: cysteine 50–cysteine 116 and cysteine 162–cysteine 216. Asparagine 53, asparagine 89, asparagine 98, asparagine 186, asparagine 207, asparagine 211, asparagine 226, and asparagine 232 each carry an N-linked (GlcNAc...) asparagine glycan. The Ig-like C2-type domain maps to proline 145–asparagine 230. Residues leucine 243–leucine 263 traverse the membrane as a helical segment. S-palmitoyl cysteine attachment occurs at residues cysteine 261, cysteine 262, cysteine 266, and cysteine 271. Residues threonine 264 to valine 288 lie on the Cytoplasmic side of the membrane. Serine 284 is subject to Phosphoserine.

As to quaternary structure, homodimer. Interacts with CTLA4; this interaction inhibits T-cell activation. Interacts with PDL1/CD274; this interaction blocks PDL1/PDCD1 binding and thus PDL1/CD274 inhibitory function. Interacts with CD28. In terms of assembly, (Microbial infection) Interacts with adenovirus subgroup B fiber proteins. (Microbial infection) Interacts with Orthopoxvirus OPG038/M2 protein, inhibiting the interaction with CTLA4/CD152. Post-translationally, palmitoylated by ZDHHC20; palmitoylation protects CD80 from ubiquitin-mediated degradation, regulating the protein stability, and ensures its accurate plasma membrane localization. As to expression, expressed on activated B-cells, macrophages and dendritic cells.

The protein resides in the cell membrane. In terms of biological role, costimulatory molecule that belongs to the immunoglobulin superfamily that plays an important role in T-lymphocyte activation. Acts as the primary auxiliary signal augmenting the MHC/TCR signal in naive T-cells together with the CD28 receptor which is constitutively expressed on the cell surface of T-cells. In turn, activates different signaling pathways such as NF-kappa-B or MAPK leading to the production of different cytokines. In addition, CD28/CD80 costimulatory signal stimulates glucose metabolism and ATP synthesis of T-cells by activating the PI3K/Akt signaling pathway. Also acts as a regulator of PDL1/PDCD1 interactions to limit excess engagement of PDL1 and its inhibitory role in immune responses. Expressed on B-cells, plays a critical role in regulating interactions between B-cells and T-cells in both early and late germinal center responses, which are crucial for the generation of effective humoral immune responses. Functionally, (Microbial infection) Acts as a receptor for adenovirus subgroup B. This chain is T-lymphocyte activation antigen CD80 (CD80), found in Homo sapiens (Human).